We begin with the raw amino-acid sequence, 163 residues long: Xanthine-guanine phosphoribosyltransferase (163 aa).

5-phospho-alpha-D-ribose 1-diphosphate-binding positions include 43 to 44 (RG) and 95 to 103 (DDLADTGGT). Asp-96 is a Mg(2+) binding site. Asp-99 and Ile-142 together coordinate guanine. Asp-99 and Ile-142 together coordinate xanthine. Residues 99–103 (DTGGT) and 141–142 (WI) each bind GMP.

It belongs to the purine/pyrimidine phosphoribosyltransferase family. XGPT subfamily. As to quaternary structure, homotetramer. The cofactor is Mg(2+).

Its subcellular location is the cell inner membrane. It catalyses the reaction GMP + diphosphate = guanine + 5-phospho-alpha-D-ribose 1-diphosphate. The enzyme catalyses XMP + diphosphate = xanthine + 5-phospho-alpha-D-ribose 1-diphosphate. It carries out the reaction IMP + diphosphate = hypoxanthine + 5-phospho-alpha-D-ribose 1-diphosphate. It functions in the pathway purine metabolism; GMP biosynthesis via salvage pathway; GMP from guanine: step 1/1. Its pathway is purine metabolism; XMP biosynthesis via salvage pathway; XMP from xanthine: step 1/1. Functionally, purine salvage pathway enzyme that catalyzes the transfer of the ribosyl-5-phosphate group from 5-phospho-alpha-D-ribose 1-diphosphate (PRPP) to the N9 position of the 6-oxopurines guanine and xanthine to form the corresponding ribonucleotides GMP (guanosine 5'-monophosphate) and XMP (xanthosine 5'-monophosphate), with the release of PPi. To a lesser extent, also acts on hypoxanthine. The chain is Xanthine-guanine phosphoribosyltransferase from Nitratidesulfovibrio vulgaris (strain ATCC 29579 / DSM 644 / CCUG 34227 / NCIMB 8303 / VKM B-1760 / Hildenborough) (Desulfovibrio vulgaris).